A 701-amino-acid chain; its full sequence is Elongation factor G (701 aa).

Residues 10–286 (NKVRNIGIMA…AVIDYLPSPL (277 aa)) enclose the tr-type G domain. GTP-binding positions include 19–26 (AHIDAGKT), 83–87 (DTPGH), and 137–140 (NKMD).

The protein belongs to the TRAFAC class translation factor GTPase superfamily. Classic translation factor GTPase family. EF-G/EF-2 subfamily.

The protein resides in the cytoplasm. Functionally, catalyzes the GTP-dependent ribosomal translocation step during translation elongation. During this step, the ribosome changes from the pre-translocational (PRE) to the post-translocational (POST) state as the newly formed A-site-bound peptidyl-tRNA and P-site-bound deacylated tRNA move to the P and E sites, respectively. Catalyzes the coordinated movement of the two tRNA molecules, the mRNA and conformational changes in the ribosome. The sequence is that of Elongation factor G from Mycobacteroides abscessus (strain ATCC 19977 / DSM 44196 / CCUG 20993 / CIP 104536 / JCM 13569 / NCTC 13031 / TMC 1543 / L948) (Mycobacterium abscessus).